A 66-amino-acid polypeptide reads, in one-letter code: Sodium/potassium-transporting ATPase subunit gamma (66 aa).

Residues G29 to L46 traverse the membrane as a helical segment.

It belongs to the FXYD family. In terms of assembly, regulatory subunit of the sodium/potassium-transporting ATPase which is composed of a catalytic alpha subunit, an auxiliary non-catalytic beta subunit and an additional regulatory subunit. As to expression, expressed in the distal convoluted tubule in the kidney. Found on basolateral membranes of nephron epithelial cells.

The protein localises to the membrane. Functionally, may be involved in forming the receptor site for cardiac glycoside binding or may modulate the transport function of the sodium ATPase. The protein is Sodium/potassium-transporting ATPase subunit gamma (FXYD2) of Homo sapiens (Human).